The chain runs to 81 residues: UPF0181 protein Spro_2806 (81 aa).

The segment at 43–81 is disordered; that stretch reads EKHQGDQVSVMFDDEDDDEEYQERPDDQADDDSEEDENY. Acidic residues-rich tracts occupy residues 54–63 and 70–81; these read FDDEDDDEEY and QADDDSEEDENY.

Belongs to the UPF0181 family.

The chain is UPF0181 protein Spro_2806 from Serratia proteamaculans (strain 568).